The primary structure comprises 466 residues: Argininosuccinate lyase (466 aa).

Belongs to the lyase 1 family. Argininosuccinate lyase subfamily.

The protein resides in the cytoplasm. The enzyme catalyses 2-(N(omega)-L-arginino)succinate = fumarate + L-arginine. Its pathway is amino-acid biosynthesis; L-arginine biosynthesis; L-arginine from L-ornithine and carbamoyl phosphate: step 3/3. The sequence is that of Argininosuccinate lyase from Ehrlichia ruminantium (strain Gardel).